The primary structure comprises 217 residues: GTP-binding protein Rit2 (217 aa).

Residues 27–34 (GAGGVGKS), 74–78 (DTAGQ), and 133–136 (NKID) contribute to the GTP site.

It belongs to the small GTPase superfamily. Ras family. As to quaternary structure, interacts with AFDN, the C-terminal domain of RALGDS and RLF, but not with RIN1 and PIK3CA. RLF binds exclusively to the active GTP-bound form. Binds calmodulin. Interacts with PLXNB3.

It localises to the nucleus. The protein resides in the cell membrane. The catalysed reaction is GTP + H2O = GDP + phosphate + H(+). Alternates between an inactive form bound to GDP and an active form bound to GTP. Its function is as follows. Binds and exchanges GTP and GDP. The protein is GTP-binding protein Rit2 (Rit2) of Rattus norvegicus (Rat).